The sequence spans 133 residues: Ribosome-binding factor A (133 aa).

It belongs to the RbfA family. Monomer. Binds 30S ribosomal subunits, but not 50S ribosomal subunits or 70S ribosomes.

It is found in the cytoplasm. Its function is as follows. One of several proteins that assist in the late maturation steps of the functional core of the 30S ribosomal subunit. Associates with free 30S ribosomal subunits (but not with 30S subunits that are part of 70S ribosomes or polysomes). Required for efficient processing of 16S rRNA. May interact with the 5'-terminal helix region of 16S rRNA. The protein is Ribosome-binding factor A of Chlamydia muridarum (strain MoPn / Nigg).